We begin with the raw amino-acid sequence, 181 residues long: Shikimate kinase 2 (181 aa).

12–17 (GCGKTT) is a binding site for ATP. Mg(2+)-binding residues include Thr16 and Asp32. Substrate is bound by residues Asp34, Arg58, and Gly79. An LID domain region spans residues 112-126 (EAEPEADLRPTLTGK). An ATP-binding site is contributed by Arg120. Arg139 is a substrate binding site.

The protein belongs to the shikimate kinase family. AroL subfamily. Monomer. Mg(2+) is required as a cofactor.

The protein localises to the cytoplasm. The enzyme catalyses shikimate + ATP = 3-phosphoshikimate + ADP + H(+). Its pathway is metabolic intermediate biosynthesis; chorismate biosynthesis; chorismate from D-erythrose 4-phosphate and phosphoenolpyruvate: step 5/7. Functionally, catalyzes the specific phosphorylation of the 3-hydroxyl group of shikimic acid using ATP as a cosubstrate. This chain is Shikimate kinase 2, found in Salmonella dublin (strain CT_02021853).